The chain runs to 1084 residues: MPRRKQQAPRRSAAYVPEEELKAAEIDEEHAEDGGLSLDIQESEFACNEETEIKEAQSYQNSPVSTATNQDAGYGSPFSEGSDQLAHFKSSSSREEKEESQCPDSVSYPQDSLAQIKAVYANLFSESCWSSLALDLKKSNSATSNNDASQKESSTPTPTPPTSTASTACTTATTAITSCSTSTSHSSTTSNSSSSGYDWHQAALAKTLQQTSSYGLLPEPSLFSTVQLYRQNNKLYGSVFTGASKFRCKDCSAAYDTLVELTVHMNETGHYRDDNRDKDSEKTKRWSKPRKRSLMEMEGKEDAQKVLKCMYCGHSFESLQDLSVHMIKTKHYQKVPLKEPVPAITKLVPSTKKRALQDLASPCSPEPTGVATEVALSESAKDQKTANPYVTPNNRYGYQNGASYTWQFEARKAQILKCMECGSSHDTLQQLTAHMMVTGHFLKVTTSASKKGKQLVLDPVVEEKIQSIPLPPTTHTRLPASSIKKQPDSPAGSVASEEKKEPEKEKEKEKAPPAAGDAERKIKEETEDATEKFEPTALYQYLREEDLDDSPKGGVDILKSLENTVSTAISKAQNGAPSWGGYPSIHAAYQLPGTVKPLQSAVQSVQIQPSYASSVKSLSSTEHNALLHSPGSLTPPPHKSNVSAMEELVEKVTGKVSIKKEERPTEKEKSSPVKAISPVAKENKDLPKTEETGSKPQKKGSDSETGKAKKESTLDAHTPNGTEPLKAKVTNGCGHLGIITDHSPEPSFINPLSALQSIMNTHLGKVSKPVSPSLDPLAMLYKISNSMLDKPVYPTTPAKQADAIDRYYYENSDQPIDLTKSKNKPLVSGVADAVSSPLRESALMDISDMVKNLTGRLTPKSSTPSTVSEKSDADGSSFEEALDELSPVHKRKGRQSNWNPQHLLILQAQFASSLRETAEGKYIMSDLGPQERVHISKFTGLSMTTISHWLANVKYQLRRTGGTKFLKNLDTGHPVFFCNDCASQFRTASTYVSHLETHLGFSLKDLSKLPLSQIQEQQSVVSKALTNKTLGPLGSSEEDLGSTFQCKLCNRTFASKHAVKLHLSKTHGKSPEDHLIYVTELEKQ.

3 disordered regions span residues 49–108 (EETE…SVSY), 140–167 (NSATSNNDASQKESSTPTPTPPTSTAST), and 269–298 (GHYRDDNRDKDSEKTKRWSKPRKRSLMEME). Polar residues-rich tracts occupy residues 57–71 (QSYQNSPVSTATNQD) and 140–152 (NSATSNNDASQKE). 2 consecutive C2H2-type zinc fingers follow at residues 246-270 (FRCKDCSAAYDTLVELTVHMNETGH) and 307-331 (LKCMYCGHSFESLQDLSVHMIKTKH). Residues 269–284 (GHYRDDNRDKDSEKTK) show a composition bias toward basic and acidic residues. A C2H2-type 3; atypical zinc finger spans residues 416–440 (LKCMECGSSHDTLQQLTAHMMVTGH). Disordered stretches follow at residues 467–534 (SIPL…EKFE) and 653–728 (TGKV…LKAK). 3 stretches are compositionally biased toward basic and acidic residues: residues 496–534 (SEEKKEPEKEKEKEKAPPAAGDAERKIKEETEDATEKFE), 653–671 (TGKVSIKKEERPTEKEKSS), and 681–714 (KENKDLPKTEETGSKPQKKGSDSETGKAKKESTL). S771 is subject to Phosphoserine. Residues 855–879 (GRLTPKSSTPSTVSEKSDADGSSFE) form a disordered region. A compositionally biased stretch (polar residues) spans 859–868 (PKSSTPSTVS). A DNA-binding region (homeobox; atypical) is located at residues 891–961 (RKGRQSNWNP…NVKYQLRRTG (71 aa)). 2 C2H2-type zinc fingers span residues 976-998 (FFCNDCASQFRTASTYVSHLETH) and 1044-1067 (FQCKLCNRTFASKHAVKLHLSKTH).

This sequence belongs to the teashirt C2H2-type zinc-finger protein family. In terms of assembly, interacts (via homeobox domain) with APBB1 (via PID domain 1).

The protein resides in the nucleus. Functionally, probable transcriptional regulator involved in developmental processes. May act as a transcriptional repressor (Potential). This chain is Teashirt homolog 1 (Tshz1), found in Mus musculus (Mouse).